Consider the following 207-residue polypeptide: Thiamine-phosphate synthase (207 aa).

4-amino-2-methyl-5-(diphosphooxymethyl)pyrimidine is bound by residues 38-42 (QYRAK) and N70. Mg(2+) contacts are provided by D71 and D90. Residue T109 coordinates 4-amino-2-methyl-5-(diphosphooxymethyl)pyrimidine. 135–137 (TNS) is a binding site for 2-[(2R,5Z)-2-carboxy-4-methylthiazol-5(2H)-ylidene]ethyl phosphate. K138 provides a ligand contact to 4-amino-2-methyl-5-(diphosphooxymethyl)pyrimidine. Residues G165 and 185 to 186 (IS) contribute to the 2-[(2R,5Z)-2-carboxy-4-methylthiazol-5(2H)-ylidene]ethyl phosphate site.

Belongs to the thiamine-phosphate synthase family. Mg(2+) serves as cofactor.

The enzyme catalyses 2-[(2R,5Z)-2-carboxy-4-methylthiazol-5(2H)-ylidene]ethyl phosphate + 4-amino-2-methyl-5-(diphosphooxymethyl)pyrimidine + 2 H(+) = thiamine phosphate + CO2 + diphosphate. The catalysed reaction is 2-(2-carboxy-4-methylthiazol-5-yl)ethyl phosphate + 4-amino-2-methyl-5-(diphosphooxymethyl)pyrimidine + 2 H(+) = thiamine phosphate + CO2 + diphosphate. It carries out the reaction 4-methyl-5-(2-phosphooxyethyl)-thiazole + 4-amino-2-methyl-5-(diphosphooxymethyl)pyrimidine + H(+) = thiamine phosphate + diphosphate. It functions in the pathway cofactor biosynthesis; thiamine diphosphate biosynthesis; thiamine phosphate from 4-amino-2-methyl-5-diphosphomethylpyrimidine and 4-methyl-5-(2-phosphoethyl)-thiazole: step 1/1. Condenses 4-methyl-5-(beta-hydroxyethyl)thiazole monophosphate (THZ-P) and 2-methyl-4-amino-5-hydroxymethyl pyrimidine pyrophosphate (HMP-PP) to form thiamine monophosphate (TMP). The sequence is that of Thiamine-phosphate synthase from Clostridium perfringens (strain SM101 / Type A).